A 522-amino-acid chain; its full sequence is BAR/IMD domain-containing adapter protein 2-like 2 (522 aa).

In terms of domain architecture, IMD spans 1–239; that stretch reads MAPEMDQFYR…HSPGLLGPAL (239 aa). 2 disordered regions span residues 220–325 and 404–502; these read SEAS…GGGG and PMSP…GTNP. Serine 231, serine 272, and serine 303 each carry phosphoserine. Polar residues predominate over residues 297–317; sequence RTPSASSLYASSTQRSRSNSF. The SH3 domain occupies 324 to 387; sequence GGARRVRALV…PEAYVKPVEE (64 aa). The span at 443–456 shows a compositional bias: low complexity; that stretch reads SQSRSRTPSRVPSR. A compositionally biased stretch (pro residues) spans 457–466; sequence APSPAPPPLP. A phosphoserine mark is found at serine 472 and serine 475.

As to expression, expressed in the epithelial layer of the intestine and in the kidney.

It is found in the cell membrane. The protein resides in the cell junction. Its subcellular location is the cytoplasmic vesicle membrane. Phosphoinositides-binding protein that induces the formation of planar or gently curved membrane structures. Binds to phosphoinositides, including to phosphatidylinositol 4,5-bisphosphate (PtdIns(4,5)P2) headgroups. There seems to be no clear preference for a specific phosphoinositide. The polypeptide is BAR/IMD domain-containing adapter protein 2-like 2 (Baiap2l2) (Mus musculus (Mouse)).